A 454-amino-acid polypeptide reads, in one-letter code: Bifunctional protein GlmU (454 aa).

Residues 1-228 (MTLPLHVVIL…PQDVEGANDP (228 aa)) form a pyrophosphorylase region. Residues 10–13 (LAAG), lysine 24, glutamine 76, 81–82 (GT), 103–105 (YGD), glycine 138, glutamate 153, asparagine 168, and asparagine 226 contribute to the UDP-N-acetyl-alpha-D-glucosamine site. Position 105 (aspartate 105) interacts with Mg(2+). Asparagine 226 lines the Mg(2+) pocket. The segment at 229 to 249 (WQLAQLERAWQLRAARALSLQ) is linker. An N-acetyltransferase region spans residues 250–454 (GVRMADPARV…IEGWERPTKK (205 aa)). UDP-N-acetyl-alpha-D-glucosamine contacts are provided by arginine 332 and lysine 350. Histidine 362 acts as the Proton acceptor in catalysis. UDP-N-acetyl-alpha-D-glucosamine-binding residues include tyrosine 365 and asparagine 376. Residues alanine 379, 385-386 (NY), serine 404, alanine 422, and arginine 439 each bind acetyl-CoA.

In the N-terminal section; belongs to the N-acetylglucosamine-1-phosphate uridyltransferase family. This sequence in the C-terminal section; belongs to the transferase hexapeptide repeat family. Homotrimer. Requires Mg(2+) as cofactor.

It localises to the cytoplasm. The enzyme catalyses alpha-D-glucosamine 1-phosphate + acetyl-CoA = N-acetyl-alpha-D-glucosamine 1-phosphate + CoA + H(+). It catalyses the reaction N-acetyl-alpha-D-glucosamine 1-phosphate + UTP + H(+) = UDP-N-acetyl-alpha-D-glucosamine + diphosphate. Its pathway is nucleotide-sugar biosynthesis; UDP-N-acetyl-alpha-D-glucosamine biosynthesis; N-acetyl-alpha-D-glucosamine 1-phosphate from alpha-D-glucosamine 6-phosphate (route II): step 2/2. It participates in nucleotide-sugar biosynthesis; UDP-N-acetyl-alpha-D-glucosamine biosynthesis; UDP-N-acetyl-alpha-D-glucosamine from N-acetyl-alpha-D-glucosamine 1-phosphate: step 1/1. It functions in the pathway bacterial outer membrane biogenesis; LPS lipid A biosynthesis. In terms of biological role, catalyzes the last two sequential reactions in the de novo biosynthetic pathway for UDP-N-acetylglucosamine (UDP-GlcNAc). The C-terminal domain catalyzes the transfer of acetyl group from acetyl coenzyme A to glucosamine-1-phosphate (GlcN-1-P) to produce N-acetylglucosamine-1-phosphate (GlcNAc-1-P), which is converted into UDP-GlcNAc by the transfer of uridine 5-monophosphate (from uridine 5-triphosphate), a reaction catalyzed by the N-terminal domain. The chain is Bifunctional protein GlmU from Xanthomonas oryzae pv. oryzae (strain MAFF 311018).